We begin with the raw amino-acid sequence, 294 residues long: Phosphatidylserine decarboxylase proenzyme (294 aa).

Catalysis depends on charge relay system; for autoendoproteolytic cleavage activity residues D88, H145, and S248. S248 serves as the catalytic Schiff-base intermediate with substrate; via pyruvic acid; for decarboxylase activity. The residue at position 248 (S248) is a Pyruvic acid (Ser); by autocatalysis.

This sequence belongs to the phosphatidylserine decarboxylase family. PSD-B subfamily. Prokaryotic type I sub-subfamily. As to quaternary structure, heterodimer of a large membrane-associated beta subunit and a small pyruvoyl-containing alpha subunit. Pyruvate is required as a cofactor. Is synthesized initially as an inactive proenzyme. Formation of the active enzyme involves a self-maturation process in which the active site pyruvoyl group is generated from an internal serine residue via an autocatalytic post-translational modification. Two non-identical subunits are generated from the proenzyme in this reaction, and the pyruvate is formed at the N-terminus of the alpha chain, which is derived from the carboxyl end of the proenzyme. The autoendoproteolytic cleavage occurs by a canonical serine protease mechanism, in which the side chain hydroxyl group of the serine supplies its oxygen atom to form the C-terminus of the beta chain, while the remainder of the serine residue undergoes an oxidative deamination to produce ammonia and the pyruvoyl prosthetic group on the alpha chain. During this reaction, the Ser that is part of the protease active site of the proenzyme becomes the pyruvoyl prosthetic group, which constitutes an essential element of the active site of the mature decarboxylase.

It localises to the cell membrane. It carries out the reaction a 1,2-diacyl-sn-glycero-3-phospho-L-serine + H(+) = a 1,2-diacyl-sn-glycero-3-phosphoethanolamine + CO2. Its pathway is phospholipid metabolism; phosphatidylethanolamine biosynthesis; phosphatidylethanolamine from CDP-diacylglycerol: step 2/2. Catalyzes the formation of phosphatidylethanolamine (PtdEtn) from phosphatidylserine (PtdSer). This is Phosphatidylserine decarboxylase proenzyme from Herminiimonas arsenicoxydans.